The sequence spans 116 residues: Large ribosomal subunit protein uL18 (116 aa).

Belongs to the universal ribosomal protein uL18 family. In terms of assembly, part of the 50S ribosomal subunit; part of the 5S rRNA/L5/L18/L25 subcomplex. Contacts the 5S and 23S rRNAs.

This is one of the proteins that bind and probably mediate the attachment of the 5S RNA into the large ribosomal subunit, where it forms part of the central protuberance. This chain is Large ribosomal subunit protein uL18, found in Exiguobacterium sibiricum (strain DSM 17290 / CCUG 55495 / CIP 109462 / JCM 13490 / 255-15).